The primary structure comprises 352 residues: Keratocan (352 aa).

A signal peptide spans 1–20; that stretch reads MAGTICFIMWVLFITDTVWS. The LRRNT domain occupies 33–71; sequence DDWTIHDFECPMECFCPPSFPTALYCENRGLKEIPAIPS. Cystine bridges form between cysteine 42–cysteine 48 and cysteine 46–cysteine 58. 10 LRR repeats span residues 72–93, 96–117, 122–142, 143–164, 167–180, 193–213, 214–235, 238–258, 263–282, and 283–304; these read RIWY…PFEN, QLRW…KGAL, KLLF…PLPR, SLEQ…TFSN, NLTL…KLVD, NLMQ…RLPA, NTMQ…YFNV, KVAF…PSRG, SILD…RISA, and HLQH…VICP. N-linked (GlcNAc...) (keratan sulfate) asparagine glycosylation occurs at asparagine 93. A glycan (N-linked (GlcNAc...) (keratan sulfate) asparagine) is linked at asparagine 167. N-linked (GlcNAc...) asparagine glycosylation occurs at asparagine 222. N-linked (GlcNAc...) asparagine glycosylation occurs at asparagine 298. Residues cysteine 303 and cysteine 343 are joined by a disulfide bond.

This sequence belongs to the small leucine-rich proteoglycan (SLRP) family. SLRP class II subfamily. Binds keratan sulfate chains. Cornea (at protein level). Increased expression in the stroma of keratoconus corneas. Also detected in trachea, and in low levels, in intestine, skeletal muscle, ovary, lung and putamen.

The protein localises to the secreted. It is found in the extracellular space. Its subcellular location is the extracellular matrix. May be important in developing and maintaining corneal transparency and for the structure of the stromal matrix. This Homo sapiens (Human) protein is Keratocan (KERA).